The sequence spans 325 residues: NADH-quinone oxidoreductase subunit H (325 aa).

Transmembrane regions (helical) follow at residues 11–31 (ILLSILKAVVILLVVVTCGAF), 81–101 (VIFTLAPMIAFTSLLLAFAIV), 114–134 (IGILFFLMMAGLAVYAVLFAG), 154–174 (LSYEVFLGLSLMGVVAQAGSF), 186–206 (IWNVIPQFFGFVTFAIAGVAV), 237–257 (FFVGEYIGIVTISALMVTLFF), 265–285 (LPPFIWFALKTAFFMMMFILI), and 304–324 (VCLPLTLVNLLVTAAVILWQA).

This sequence belongs to the complex I subunit 1 family. In terms of assembly, NDH-1 is composed of 13 different subunits. Subunits NuoA, H, J, K, L, M, N constitute the membrane sector of the complex.

It is found in the cell inner membrane. The enzyme catalyses a quinone + NADH + 5 H(+)(in) = a quinol + NAD(+) + 4 H(+)(out). In terms of biological role, NDH-1 shuttles electrons from NADH, via FMN and iron-sulfur (Fe-S) centers, to quinones in the respiratory chain. The immediate electron acceptor for the enzyme in this species is believed to be ubiquinone. Couples the redox reaction to proton translocation (for every two electrons transferred, four hydrogen ions are translocated across the cytoplasmic membrane), and thus conserves the redox energy in a proton gradient. This subunit may bind ubiquinone. This chain is NADH-quinone oxidoreductase subunit H, found in Enterobacter sp. (strain 638).